Here is a 57-residue protein sequence, read N- to C-terminus: MAVQQNKPTRSKRGMRRSHDALTAVTSLSVDQTSGEKHLRHHITADGFYRGRKVITK.

The tract at residues 1–38 (MAVQQNKPTRSKRGMRRSHDALTAVTSLSVDQTSGEKH) is disordered. Residues 24–33 (AVTSLSVDQT) show a composition bias toward polar residues.

The protein belongs to the bacterial ribosomal protein bL32 family.

This chain is Large ribosomal subunit protein bL32, found in Enterobacter sp. (strain 638).